Consider the following 206-residue polypeptide: GDT1-like protein sll0615 (206 aa).

Helical transmembrane passes span 36–56 (WVLV…VLMG), 58–78 (IFTF…FLIF), 114–134 (IVPR…VAEW), 151–171 (AWGV…IAVM), and 185–205 (VTLI…WTKI).

The protein belongs to the GDT1 family.

It localises to the cell membrane. In Synechocystis sp. (strain ATCC 27184 / PCC 6803 / Kazusa), this protein is GDT1-like protein sll0615.